Reading from the N-terminus, the 327-residue chain is Probable cell division protein WhiA (327 aa).

The H-T-H motif DNA-binding region spans 275 to 308 (SLEELGRLADPQMTKDAVAGRIRRLLTMADKRAE).

Belongs to the WhiA family.

Its function is as follows. Involved in cell division and chromosome segregation. The sequence is that of Probable cell division protein WhiA from Corynebacterium glutamicum (strain ATCC 13032 / DSM 20300 / JCM 1318 / BCRC 11384 / CCUG 27702 / LMG 3730 / NBRC 12168 / NCIMB 10025 / NRRL B-2784 / 534).